We begin with the raw amino-acid sequence, 110 residues long: NADH-quinone oxidoreductase subunit K (110 aa).

Helical transmembrane passes span L13 to M33, I41 to I61, and I73 to Y93.

The protein belongs to the complex I subunit 4L family. As to quaternary structure, NDH-1 is composed of 14 different subunits. Subunits NuoA, H, J, K, L, M, N constitute the membrane sector of the complex.

The protein resides in the cell inner membrane. The enzyme catalyses a quinone + NADH + 5 H(+)(in) = a quinol + NAD(+) + 4 H(+)(out). In terms of biological role, NDH-1 shuttles electrons from NADH, via FMN and iron-sulfur (Fe-S) centers, to quinones in the respiratory chain. The immediate electron acceptor for the enzyme in this species is believed to be ubiquinone. Couples the redox reaction to proton translocation (for every two electrons transferred, four hydrogen ions are translocated across the cytoplasmic membrane), and thus conserves the redox energy in a proton gradient. The chain is NADH-quinone oxidoreductase subunit K from Rickettsia felis (strain ATCC VR-1525 / URRWXCal2) (Rickettsia azadi).